We begin with the raw amino-acid sequence, 93 residues long: Long neurotoxin 2 (93 aa).

An N-terminal signal peptide occupies residues 1-21 (MKILLLTLVVVTIVCLDLAYT). Cystine bridges form between cysteine 24/cysteine 42, cysteine 35/cysteine 63, cysteine 48/cysteine 52, cysteine 67/cysteine 78, and cysteine 79/cysteine 84.

It belongs to the three-finger toxin family. Long-chain subfamily. Type II alpha-neurotoxin sub-subfamily. In terms of tissue distribution, expressed by the venom gland.

The protein resides in the secreted. Binds with high affinity to muscular (alpha-1/CHRNA1) and neuronal (alpha-7/CHRNA7) nicotinic acetylcholine receptor (nAChR) and inhibits acetylcholine from binding to the receptor, thereby impairing neuromuscular and neuronal transmission. This Hydrophis hardwickii (Hardwick's spine-bellied seasnake) protein is Long neurotoxin 2.